The chain runs to 200 residues: NADH-quinone oxidoreductase subunit C (200 aa).

Belongs to the complex I 30 kDa subunit family. As to quaternary structure, NDH-1 is composed of 14 different subunits. Subunits NuoB, C, D, E, F, and G constitute the peripheral sector of the complex.

It localises to the cell inner membrane. The catalysed reaction is a quinone + NADH + 5 H(+)(in) = a quinol + NAD(+) + 4 H(+)(out). NDH-1 shuttles electrons from NADH, via FMN and iron-sulfur (Fe-S) centers, to quinones in the respiratory chain. The immediate electron acceptor for the enzyme in this species is believed to be ubiquinone. Couples the redox reaction to proton translocation (for every two electrons transferred, four hydrogen ions are translocated across the cytoplasmic membrane), and thus conserves the redox energy in a proton gradient. This is NADH-quinone oxidoreductase subunit C from Burkholderia cenocepacia (strain HI2424).